The following is a 167-amino-acid chain: Ribosome maturation factor RimM (167 aa).

A PRC barrel domain is found at 93–165 (KGVYYDFQLI…QVIIDPIPGL (73 aa)).

This sequence belongs to the RimM family. Binds ribosomal protein uS19.

It localises to the cytoplasm. In terms of biological role, an accessory protein needed during the final step in the assembly of 30S ribosomal subunit, possibly for assembly of the head region. Essential for efficient processing of 16S rRNA. May be needed both before and after RbfA during the maturation of 16S rRNA. It has affinity for free ribosomal 30S subunits but not for 70S ribosomes. The chain is Ribosome maturation factor RimM from Dehalococcoides mccartyi (strain ATCC BAA-2266 / KCTC 15142 / 195) (Dehalococcoides ethenogenes (strain 195)).